Reading from the N-terminus, the 724-residue chain is Probable serine/threonine-protein kinase KKQ8 (724 aa).

2 disordered regions span residues 1 to 81 (MVMQ…RQRS) and 93 to 188 (HPFR…KDIL). Residue Ser19 is modified to Phosphoserine. Low complexity predominate over residues 45–54 (PYRSSSTSPK). The segment covering 95-106 (FRQTGSGASNSP) has biased composition (polar residues). The segment covering 143-162 (RSSSVSSCDSSNGTTSSSDS) has biased composition (low complexity). Ser232, Ser238, and Ser241 each carry phosphoserine. Residues 329–355 (SQTNHEKRTGQSPNDSNRSSPTQGRED) form a disordered region. Residues 338–351 (GQSPNDSNRSSPTQ) show a composition bias toward polar residues. A Protein kinase domain is found at 412 to 712 (GHPVGLVGAG…VGKLLDMQWM (301 aa)). ATP contacts are provided by residues 418-426 (VGAGAYGEV) and Lys455. The active-site Proton acceptor is the Asp563.

It belongs to the protein kinase superfamily. CAMK Ser/Thr protein kinase family. NPR/HAL subfamily. HAL5 sub-subfamily.

It is found in the cytoplasm. It catalyses the reaction L-seryl-[protein] + ATP = O-phospho-L-seryl-[protein] + ADP + H(+). The catalysed reaction is L-threonyl-[protein] + ATP = O-phospho-L-threonyl-[protein] + ADP + H(+). The chain is Probable serine/threonine-protein kinase KKQ8 (KKQ8) from Saccharomyces cerevisiae (strain ATCC 204508 / S288c) (Baker's yeast).